A 171-amino-acid polypeptide reads, in one-letter code: MPRSQRNDNFIDKTFTIVADILLRVIPTTQREKEAFTYYRDGMSAQSEGEYAEALQNYYKAMRLEIDPYDRSYILYNIGLIHTSNGEHAKALEYYSQALERNPSLPQAFNNMAVICHYRGEQAIQQGDPETSEAWFDQAAEYWKQAIALAPSNYIEAQNWLKITGRLKEWV.

3 TPR repeats span residues 35–68, 72–105, and 120–153; these read AFTY…EIDP, SYIL…NPSL, and GEQA…APSN.

Belongs to the Ycf3 family.

It is found in the plastid. It localises to the chloroplast thylakoid membrane. Functionally, essential for the assembly of the photosystem I (PSI) complex. May act as a chaperone-like factor to guide the assembly of the PSI subunits. The polypeptide is Photosystem I assembly protein Ycf3 (Angiopteris evecta (Mule's foot fern)).